The primary structure comprises 216 residues: Somatotropin (216 aa).

Positions 1 to 25 (MAPGSWFSPLLIAVVTLGLPQGAAA) are cleaved as a signal peptide. Histidine 45 is a Zn(2+) binding site. The cysteines at positions 78 and 189 are disulfide-linked. Glutamate 198 lines the Zn(2+) pocket. Cysteines 206 and 214 form a disulfide.

It belongs to the somatotropin/prolactin family. Pituitary gland.

It is found in the secreted. Functionally, growth hormone plays an important role in growth control. The chain is Somatotropin (GH) from Meleagris gallopavo (Wild turkey).